The primary structure comprises 151 residues: Putative esterase VNG_1336C (151 aa).

This sequence belongs to the thioesterase PaaI family.

This is Putative esterase VNG_1336C from Halobacterium salinarum (strain ATCC 700922 / JCM 11081 / NRC-1) (Halobacterium halobium).